The chain runs to 221 residues: MSDEWTPRTQLGKLVASGQIKTISEALKTKLPLKEYEIVDYLLPNIKDEVIDIKRAQRMTDSGRRMTYSITVVVGNEDGYIGLGIGRSKEAAPAIRKALINAKLNIMEIRRGCGSWECGCGRAHTLPFLVEGKSGSVRITLKPAPRGVGLAVGNVAKIILRMAGIEDAWGFAAGHTKTTVNYALAVYNALKETAKVRINPGIVLSTPIYSGSVINVSGHTD.

Residues 46–109 enclose the S5 DRBM domain; the sequence is IKDEVIDIKR…INAKLNIMEI (64 aa).

It belongs to the universal ribosomal protein uS5 family. In terms of assembly, part of the 30S ribosomal subunit. Contacts protein S4.

In terms of biological role, with S4 and S12 plays an important role in translational accuracy. This is Small ribosomal subunit protein uS5 from Thermoplasma volcanium (strain ATCC 51530 / DSM 4299 / JCM 9571 / NBRC 15438 / GSS1).